The following is an 86-amino-acid chain: Large ribosomal subunit protein bL27 (86 aa).

Belongs to the bacterial ribosomal protein bL27 family.

The sequence is that of Large ribosomal subunit protein bL27 from Christiangramia forsetii (strain DSM 17595 / CGMCC 1.15422 / KT0803) (Gramella forsetii).